The chain runs to 322 residues: tRNA-dihydrouridine synthase B (322 aa).

Residues Pro16–Ala18 and Gln70 each bind FMN. Cys100 functions as the Proton donor in the catalytic mechanism. Residues Lys139, Asn200–Asp202, and Gly224–Arg225 contribute to the FMN site.

This sequence belongs to the Dus family. DusB subfamily. FMN serves as cofactor.

The enzyme catalyses a 5,6-dihydrouridine in tRNA + NAD(+) = a uridine in tRNA + NADH + H(+). The catalysed reaction is a 5,6-dihydrouridine in tRNA + NADP(+) = a uridine in tRNA + NADPH + H(+). In terms of biological role, catalyzes the synthesis of 5,6-dihydrouridine (D), a modified base found in the D-loop of most tRNAs, via the reduction of the C5-C6 double bond in target uridines. The chain is tRNA-dihydrouridine synthase B from Vibrio vulnificus (strain CMCP6).